A 197-amino-acid polypeptide reads, in one-letter code: FMN-dependent NADH:quinone oxidoreductase (197 aa).

Serine 10 is an FMN binding site.

This sequence belongs to the azoreductase type 1 family. Homodimer. It depends on FMN as a cofactor.

It catalyses the reaction 2 a quinone + NADH + H(+) = 2 a 1,4-benzosemiquinone + NAD(+). The enzyme catalyses N,N-dimethyl-1,4-phenylenediamine + anthranilate + 2 NAD(+) = 2-(4-dimethylaminophenyl)diazenylbenzoate + 2 NADH + 2 H(+). Quinone reductase that provides resistance to thiol-specific stress caused by electrophilic quinones. Functionally, also exhibits azoreductase activity. Catalyzes the reductive cleavage of the azo bond in aromatic azo compounds to the corresponding amines. The polypeptide is FMN-dependent NADH:quinone oxidoreductase (Mycoplasma pneumoniae (strain ATCC 29342 / M129 / Subtype 1) (Mycoplasmoides pneumoniae)).